We begin with the raw amino-acid sequence, 345 residues long: Anthranilate phosphoribosyltransferase 1 (345 aa).

5-phospho-alpha-D-ribose 1-diphosphate-binding positions include glycine 86, 89–90, threonine 94, 96–99, 114–122, and serine 126; these read GD, NIST, and KHGGRGVSS. Glycine 86 contacts anthranilate. Serine 98 lines the Mg(2+) pocket. Anthranilate is bound at residue arginine 172. Aspartate 231 and glutamate 232 together coordinate Mg(2+).

It belongs to the anthranilate phosphoribosyltransferase family. Homodimer. Requires Mg(2+) as cofactor.

It catalyses the reaction N-(5-phospho-beta-D-ribosyl)anthranilate + diphosphate = 5-phospho-alpha-D-ribose 1-diphosphate + anthranilate. Its pathway is amino-acid biosynthesis; L-tryptophan biosynthesis; L-tryptophan from chorismate: step 2/5. Catalyzes the transfer of the phosphoribosyl group of 5-phosphorylribose-1-pyrophosphate (PRPP) to anthranilate to yield N-(5'-phosphoribosyl)-anthranilate (PRA). The protein is Anthranilate phosphoribosyltransferase 1 of Ralstonia nicotianae (strain ATCC BAA-1114 / GMI1000) (Ralstonia solanacearum).